The primary structure comprises 228 residues: LexA repressor (228 aa).

A DNA-binding region (H-T-H motif) is located at residues 26 to 46; that stretch reads FDEMKDALDLRSKSGIHRLIT. Catalysis depends on for autocatalytic cleavage activity residues Ser-149 and Lys-187.

It belongs to the peptidase S24 family. Homodimer.

It carries out the reaction Hydrolysis of Ala-|-Gly bond in repressor LexA.. In terms of biological role, represses a number of genes involved in the response to DNA damage (SOS response), including recA and lexA. Has been shown to bind to the direct repeat sequence 5'-GTT-N(7)-GTTC-3'. In the presence of single-stranded DNA, RecA interacts with LexA causing an autocatalytic cleavage which disrupts the DNA-binding part of LexA, leading to derepression of the SOS regulon and eventually DNA repair. In Cereibacter sphaeroides (strain ATCC 17023 / DSM 158 / JCM 6121 / CCUG 31486 / LMG 2827 / NBRC 12203 / NCIMB 8253 / ATH 2.4.1.) (Rhodobacter sphaeroides), this protein is LexA repressor.